A 196-amino-acid polypeptide reads, in one-letter code: Ribonuclease H (196 aa).

The RNase H type-1 domain occupies 58–196; it reads LAKEEIIWES…GEIKADYGRK (139 aa). Mg(2+) contacts are provided by D71, E109, D132, and D192.

This sequence belongs to the RNase H family. Mn(2+) serves as cofactor. Requires Mg(2+) as cofactor.

It localises to the cytoplasm. The catalysed reaction is Endonucleolytic cleavage to 5'-phosphomonoester.. Endonuclease that specifically degrades the RNA of RNA-DNA hybrids. The sequence is that of Ribonuclease H (rnhA) from Halalkalibacterium halodurans (strain ATCC BAA-125 / DSM 18197 / FERM 7344 / JCM 9153 / C-125) (Bacillus halodurans).